A 509-amino-acid chain; its full sequence is L-aspartate semialdehyde sulfurtransferase (509 aa).

The Cysteine persulfide intermediate role is filled by Cys-133. 2 consecutive CBS domains span residues 394 to 450 and 455 to 509; these read LSKP…NKKT and MTRN…GGKK. S-methyl-5'-thioadenosine contacts are provided by Ser-395, Ile-399, and His-421. S-adenosyl-L-methionine-binding positions include Asp-439, Thr-456, Ile-460, and 479–482; that span reads NISG. Residue 497 to 500 coordinates S-methyl-5'-thioadenosine; that stretch reads TSED.

It belongs to the L-aspartate semialdehyde sulfurtransferase family. As to quaternary structure, homodimer. May form a complex with MJ0099.

It catalyses the reaction L-aspartate 4-semialdehyde + reduced 2[4Fe-4S]-[ferredoxin] + hydrogen sulfide + 3 H(+) = oxidized 2[4Fe-4S]-[ferredoxin] + L-homocysteine + H2O. Its pathway is amino-acid biosynthesis. With respect to regulation, the ligand-induced conformational reorganization of the protein could be an important regulatory mechanism. Required for O-acetylhomoserine sulfhydrylase (OAHS)-independent homocysteine (Hcy) biosynthesis. Together with MJ0099, catalyzes the condensation of sulfide with aspartate semialdehyde to generate homocysteine. Likely functions through persulfide intermediate. The sequence is that of L-aspartate semialdehyde sulfurtransferase from Methanocaldococcus jannaschii (strain ATCC 43067 / DSM 2661 / JAL-1 / JCM 10045 / NBRC 100440) (Methanococcus jannaschii).